The primary structure comprises 1165 residues: Chromosome partition protein Smc (1165 aa).

ATP is bound at residue 32 to 39 (PNGSGKSN). A coiled-coil region spans residues 161-503 (AGVAEFDRKI…ETQRQVWREA (343 aa)). The region spanning 518 to 630 (QGVHGLISQL…VFRSLELARR (113 aa)) is the SMC hinge domain. Coiled coils occupy residues 672–901 (ELAE…LQQR) and 946–1010 (DLSL…DCDT).

The protein belongs to the SMC family. As to quaternary structure, homodimer.

It localises to the cytoplasm. Required for chromosome condensation and partitioning. The protein is Chromosome partition protein Smc of Gloeobacter violaceus (strain ATCC 29082 / PCC 7421).